The following is a 146-amino-acid chain: Hemoglobin subunit beta (146 aa).

Val1 is subject to N-acetylvaline. The Globin domain maps to 2-146 (HLTAAEKSAI…VANALAHKYH (145 aa)). His63 provides a ligand contact to heme b. Lys82 bears the N6-acetyllysine mark. His92 is a heme b binding site. Residue Cys93 is modified to S-nitrosocysteine. At Lys144 the chain carries N6-acetyllysine.

It belongs to the globin family. Heterotetramer of two alpha chains and two beta chains. Red blood cells.

Its function is as follows. Involved in oxygen transport from the lung to the various peripheral tissues. The sequence is that of Hemoglobin subunit beta (HBB) from Cavia porcellus (Guinea pig).